Consider the following 1372-residue polypeptide: DNA-directed RNA polymerase subunit beta' (1372 aa).

Residues cysteine 69, cysteine 71, cysteine 84, and cysteine 87 each contribute to the Zn(2+) site. Mg(2+) is bound by residues aspartate 460, aspartate 462, and aspartate 464. Cysteine 808, cysteine 882, cysteine 889, and cysteine 892 together coordinate Zn(2+).

Belongs to the RNA polymerase beta' chain family. The RNAP catalytic core consists of 2 alpha, 1 beta, 1 beta' and 1 omega subunit. When a sigma factor is associated with the core the holoenzyme is formed, which can initiate transcription. Mg(2+) serves as cofactor. It depends on Zn(2+) as a cofactor.

It catalyses the reaction RNA(n) + a ribonucleoside 5'-triphosphate = RNA(n+1) + diphosphate. In terms of biological role, DNA-dependent RNA polymerase catalyzes the transcription of DNA into RNA using the four ribonucleoside triphosphates as substrates. The protein is DNA-directed RNA polymerase subunit beta' of Rickettsia rickettsii (strain Iowa).